Reading from the N-terminus, the 116-residue chain is Large ribosomal subunit protein bL17 (116 aa).

Belongs to the bacterial ribosomal protein bL17 family. Part of the 50S ribosomal subunit. Contacts protein L32.

The protein is Large ribosomal subunit protein bL17 of Synechocystis sp. (strain ATCC 27184 / PCC 6803 / Kazusa).